A 343-amino-acid polypeptide reads, in one-letter code: Selenide, water dikinase (343 aa).

The active site involves Sec-13. Residue Sec-13 is a non-standard amino acid, selenocysteine. ATP contacts are provided by residues Lys-16 and 44–46; that span reads TAD. Asp-47 is a binding site for Mg(2+). ATP contacts are provided by residues Asp-64, Asp-87, and 135–137; that span reads GHT. Residue Asp-87 participates in Mg(2+) binding. Asp-223 contributes to the Mg(2+) binding site.

It belongs to the selenophosphate synthase 1 family. Class I subfamily. In terms of assembly, homodimer. The cofactor is Mg(2+).

It catalyses the reaction hydrogenselenide + ATP + H2O = selenophosphate + AMP + phosphate + 2 H(+). Synthesizes selenophosphate from selenide and ATP. In Geobacter metallireducens (strain ATCC 53774 / DSM 7210 / GS-15), this protein is Selenide, water dikinase.